A 691-amino-acid polypeptide reads, in one-letter code: Elongation factor G (691 aa).

The 275-residue stretch at 12–286 (NKLRNIGIMA…GIVRYLPSPL (275 aa)) folds into the tr-type G domain. Residues 21-28 (AHIDAGKT), 85-89 (DTPGH), and 139-142 (NKMD) each bind GTP.

It belongs to the TRAFAC class translation factor GTPase superfamily. Classic translation factor GTPase family. EF-G/EF-2 subfamily.

The protein resides in the cytoplasm. Functionally, catalyzes the GTP-dependent ribosomal translocation step during translation elongation. During this step, the ribosome changes from the pre-translocational (PRE) to the post-translocational (POST) state as the newly formed A-site-bound peptidyl-tRNA and P-site-bound deacylated tRNA move to the P and E sites, respectively. Catalyzes the coordinated movement of the two tRNA molecules, the mRNA and conformational changes in the ribosome. The chain is Elongation factor G from Fervidobacterium nodosum (strain ATCC 35602 / DSM 5306 / Rt17-B1).